A 187-amino-acid chain; its full sequence is MSPALQKGSSLMENRSPPSSFSIEHILGLDKKTDVASSPIIKHHRPWIECSSKGVVNGTCWQIPVIACDLPIQVHAVHRSEEEETKIRLEKCFGDEDRLTYKRELSWYRGRRPRTAFTRSQIEILENVFRVNSYPGIDVREELASKLALDEDRIQIWFQNRRAKLKRSHRESQFLIVKDSLSSKIQE.

Residues 110-169 (GRRPRTAFTRSQIEILENVFRVNSYPGIDVREELASKLALDEDRIQIWFQNRRAKLKRSH) constitute a DNA-binding region (homeobox).

This sequence belongs to the ANF homeobox family. The N-terminus interacts with the LIM 2 domain of zyx. As to expression, first expressed at a low level in the late blastula stage (stage 9) in most cells of the animal half of the embryo. Following this, predominantly expressed in two zones; the dorsal blastopore lip (Spemann organizer) at the beginning of gastrulation, and subsequently in the anterior part of the neural anlage (the region of future forebrain).

It is found in the nucleus. In terms of biological role, regulates the earliest stages of development of the anterior neural plate. Plays a role in forebrain development by inhibiting the expression of otx2 and pax6 in the rostral region of the anterior neural plate. Necessary for both neural differentiation and neural patterning. Controls Spemann organizer development. May act as a transcriptional repressor. The protein is Homeobox expressed in ES cells 1-B (hesx1-b) of Xenopus laevis (African clawed frog).